The sequence spans 288 residues: ATP synthase subunit a (288 aa).

Transmembrane regions (helical) follow at residues Leu47–Val67, Leu104–Leu124, Asp157–Ile177, Pro199–Ala219, Leu237–Trp257, and Ala258–Val278.

This sequence belongs to the ATPase A chain family. As to quaternary structure, F-type ATPases have 2 components, CF(1) - the catalytic core - and CF(0) - the membrane proton channel. CF(1) has five subunits: alpha(3), beta(3), gamma(1), delta(1), epsilon(1). CF(0) has three main subunits: a(1), b(2) and c(9-12). The alpha and beta chains form an alternating ring which encloses part of the gamma chain. CF(1) is attached to CF(0) by a central stalk formed by the gamma and epsilon chains, while a peripheral stalk is formed by the delta and b chains.

It localises to the cell inner membrane. Its function is as follows. Key component of the proton channel; it plays a direct role in the translocation of protons across the membrane. In Psychrobacter cryohalolentis (strain ATCC BAA-1226 / DSM 17306 / VKM B-2378 / K5), this protein is ATP synthase subunit a.